We begin with the raw amino-acid sequence, 748 residues long: E3 ubiquitin-protein ligase DTX3L (748 aa).

Position 2 is an N-acetylalanine (A2). S9 is modified (phosphoserine). Disordered regions lie at residues 94–117 (DLRP…PSLT), 209–238 (EQKR…PPDQ), and 528–562 (QETP…PAAS). Residues 101-117 (SLTQPVETPSSRPPSLT) are compositionally biased toward polar residues. Basic and acidic residues-rich tracts occupy residues 209–219 (EQKRKGSEQKR) and 227–236 (TPPDVEREPP). A Phosphoserine modification is found at S215. S536 bears the Phosphoserine mark. The RING-type zinc-finger motif lies at 569 to 608 (CVICMDTISNKHVLPKCKHEFCTSCISKAMLIKPVCPVCL).

This sequence belongs to the Deltex family. Homodimer and heterodimer. Can heterodimerize with DTX1, enhancing its ubiquitin ligase activity in vitro. Interacts (via N-terminus) with ADP ribosyltransferase PARP9/BAL1 (via PARP catalytic domain) forming a stable complex; the interaction is required to activate PARP9 but is dispensable for DTX3L catalytic activity. Forms a complex with STAT1 and PARP9 independently of IFNB1 or IFNG-mediated STAT1 'Tyr-701' phosphorylation. Found in a complex with PARP9, STAT1 and H2BC9. Found in a complex with E3 ligase ITCH and ESCRT-0 components HGS and STAM. Interacts (via C-terminus) with ITCH; the interaction is increased upon CXCL12 stimulation and inhibits ITCH catalytic activity; the interaction is direct. Interacts with HGS and STAM; the interaction brings together HGS and STAM and promotes their recruitment to early endosomes. In terms of processing, autoubiquitinated.

The protein resides in the cytoplasm. The protein localises to the nucleus. It localises to the early endosome membrane. Its subcellular location is the lysosome membrane. The enzyme catalyses S-ubiquitinyl-[E2 ubiquitin-conjugating enzyme]-L-cysteine + [acceptor protein]-L-lysine = [E2 ubiquitin-conjugating enzyme]-L-cysteine + N(6)-ubiquitinyl-[acceptor protein]-L-lysine.. It participates in protein modification; protein ubiquitination. Its activity is regulated as follows. Binding to PARP9 enhances DTX3L catalytic activity. E3 ubiquitin-protein ligase which, in association with ADP-ribosyltransferase PARP9, plays a role in DNA damage repair and in interferon-mediated antiviral responses. Monoubiquitinates several histones, including histone H2A, H2B, H3 and H4. In response to DNA damage, mediates monoubiquitination of 'Lys-91' of histone H4 (H4K91ub1). The exact role of H4K91ub1 in DNA damage response is still unclear but it may function as a licensing signal for additional histone H4 post-translational modifications such as H4 'Lys-20' methylation (H4K20me). PARP1-dependent PARP9-DTX3L-mediated ubiquitination promotes the rapid and specific recruitment of 53BP1/TP53BP1, UIMC1/RAP80, and BRCA1 to DNA damage sites. By monoubiquitinating histone H2B H2BC9/H2BJ and thereby promoting chromatin remodeling, positively regulates STAT1-dependent interferon-stimulated gene transcription and thus STAT1-mediated control of viral replication. Independently of its catalytic activity, promotes the sorting of chemokine receptor CXCR4 from early endosome to lysosome following CXCL12 stimulation by reducing E3 ligase ITCH activity and thus ITCH-mediated ubiquitination of endosomal sorting complex required for transport ESCRT-0 components HGS and STAM. In addition, required for the recruitment of HGS and STAM to early endosomes. This Mus musculus (Mouse) protein is E3 ubiquitin-protein ligase DTX3L (Dtx3l).